Reading from the N-terminus, the 209-residue chain is Large ribosomal subunit protein bL9 (209 aa).

Residues 181-209 (EASEEGQELAAQREATEDAGADESEETEA) form a disordered region. The span at 197–209 (EDAGADESEETEA) shows a compositional bias: acidic residues.

The protein belongs to the bacterial ribosomal protein bL9 family.

Functionally, binds to the 23S rRNA. The chain is Large ribosomal subunit protein bL9 from Maricaulis maris (strain MCS10) (Caulobacter maris).